Reading from the N-terminus, the 38-residue chain is Large ribosomal subunit protein bL36 (38 aa).

This sequence belongs to the bacterial ribosomal protein bL36 family.

The polypeptide is Large ribosomal subunit protein bL36 (Phytoplasma australiense).